Reading from the N-terminus, the 455-residue chain is UDP-N-acetylmuramoyl-tripeptide--D-alanyl-D-alanine ligase (455 aa).

107–113 (GSCGKTS) serves as a coordination point for ATP.

This sequence belongs to the MurCDEF family. MurF subfamily.

It localises to the cytoplasm. The enzyme catalyses D-alanyl-D-alanine + UDP-N-acetyl-alpha-D-muramoyl-L-alanyl-gamma-D-glutamyl-meso-2,6-diaminopimelate + ATP = UDP-N-acetyl-alpha-D-muramoyl-L-alanyl-gamma-D-glutamyl-meso-2,6-diaminopimeloyl-D-alanyl-D-alanine + ADP + phosphate + H(+). It functions in the pathway cell wall biogenesis; peptidoglycan biosynthesis. Functionally, involved in cell wall formation. Catalyzes the final step in the synthesis of UDP-N-acetylmuramoyl-pentapeptide, the precursor of murein. This Buchnera aphidicola subsp. Acyrthosiphon pisum (strain APS) (Acyrthosiphon pisum symbiotic bacterium) protein is UDP-N-acetylmuramoyl-tripeptide--D-alanyl-D-alanine ligase.